Here is a 249-residue protein sequence, read N- to C-terminus: Chromosome segregation and cytokinesis defective protein 1 (249 aa).

The stretch at 12–48 (VVAMADTLETRVKDLLEEYKKKLREVALQTAKAESDR) forms a coiled coil. 3 disordered regions span residues 70-89 (PDDF…AAVA), 94-183 (LPSE…PEKP), and 208-249 (TTAT…GTSV). A compositionally biased stretch (acidic residues) spans 73-85 (FYIESGEEEEEGE). Positions 109 to 126 (QKTSIPIGQNSGRNTVQV) are enriched in polar residues. Over residues 224 to 236 (SGAASKKAAAAAG) the composition is skewed to low complexity.

The protein belongs to the borealin family. Highly divergent. As to quaternary structure, component of the CPC complex which consists of icp-1; csc-1; bir-1 and air-2. Within the complex interacts with Aurora B/air-2, bir-1 and icp-1.

It localises to the nucleus. The protein resides in the chromosome. The protein localises to the centromere. Its subcellular location is the cytoplasm. It is found in the cytoskeleton. It localises to the spindle. Component of the chromosomal passenger complex (CPC), a complex that acts as a key regulator of chromosome segregation and cytokinesis during mitosis. The CPC complex has essential functions at the centromere in ensuring correct chromosome alignment and segregation. In the complex, it may be required to direct the Aurora B/air-2 to centromeric DNA. The sequence is that of Chromosome segregation and cytokinesis defective protein 1 (csc-1) from Caenorhabditis elegans.